The following is a 391-amino-acid chain: Serpin-ZX (391 aa).

The tract at residues 337 to 361 (GTEAAAASAGVIKLRGLLMEEDEID) is RCL. Asn375 carries an N-linked (GlcNAc...) asparagine glycan.

Belongs to the serpin family. As to quaternary structure, interacts with RD21A. In terms of tissue distribution, expressed in root tips. Expressed in siliques (at protein level).

It is found in the secreted. The protein localises to the extracellular space. It localises to the apoplast. Its subcellular location is the cytoplasm. Its function is as follows. Inhibits metacaspase-9 (MC9) cysteine protease. Functions through cleavage of its reactive center loop and covalent binding to MC9. Involved in the control of elicitor-stimulated programmed cell death (PCD). During infection by the necrotrophic fungal pathogen Botrytis cinerea, functions to protect cells by limiting the PCD-promoting protease RD21A activity that is released from the ER body or vacuole to the cytoplasm. Involved in the control of water stress-induced cell death by limiting the pro-death protease RD21A activity that is released from the vacuole to the cytoplasm. This chain is Serpin-ZX, found in Arabidopsis thaliana (Mouse-ear cress).